The sequence spans 501 residues: Leukocyte receptor cluster member 9 (501 aa).

Disordered stretches follow at residues 1 to 43 (MGSR…PAPP), 61 to 86 (RQPH…KPPL), 203 to 234 (GQEA…GELE), and 281 to 300 (QALG…WGPA). The segment at 40–67 (PAPPPACRFFLEGRCRFGARCRQPHPGA) adopts a C3H1-type zinc-finger fold.

The protein is Leukocyte receptor cluster member 9 (LENG9) of Homo sapiens (Human).